A 463-amino-acid chain; its full sequence is Glycine--tRNA ligase (463 aa).

Residue Arg-102 coordinates substrate. Positions 113-134 are disordered; the sequence is KHGHPPPNGLADIRDPDTGEPG. Position 165 (Glu-165) interacts with substrate. ATP contacts are provided by residues 197 to 199, 207 to 212, 284 to 285, and 328 to 331; these read RNE, FRTREF, EL, and GLTR. 212–216 is a substrate binding site; it reads FEQME. Substrate is bound at residue 324-328; the sequence is EPAAG.

It belongs to the class-II aminoacyl-tRNA synthetase family. In terms of assembly, homodimer.

It is found in the cytoplasm. It carries out the reaction tRNA(Gly) + glycine + ATP = glycyl-tRNA(Gly) + AMP + diphosphate. Its function is as follows. Catalyzes the attachment of glycine to tRNA(Gly). This is Glycine--tRNA ligase from Mycolicibacterium paratuberculosis (strain ATCC BAA-968 / K-10) (Mycobacterium paratuberculosis).